Reading from the N-terminus, the 156-residue chain is ATP synthase subunit b (156 aa).

Residues Ala11–Ala31 traverse the membrane as a helical segment.

It belongs to the ATPase B chain family. In terms of assembly, F-type ATPases have 2 components, F(1) - the catalytic core - and F(0) - the membrane proton channel. F(1) has five subunits: alpha(3), beta(3), gamma(1), delta(1), epsilon(1). F(0) has three main subunits: a(1), b(2) and c(10-14). The alpha and beta chains form an alternating ring which encloses part of the gamma chain. F(1) is attached to F(0) by a central stalk formed by the gamma and epsilon chains, while a peripheral stalk is formed by the delta and b chains.

The protein localises to the cell inner membrane. In terms of biological role, f(1)F(0) ATP synthase produces ATP from ADP in the presence of a proton or sodium gradient. F-type ATPases consist of two structural domains, F(1) containing the extramembraneous catalytic core and F(0) containing the membrane proton channel, linked together by a central stalk and a peripheral stalk. During catalysis, ATP synthesis in the catalytic domain of F(1) is coupled via a rotary mechanism of the central stalk subunits to proton translocation. Functionally, component of the F(0) channel, it forms part of the peripheral stalk, linking F(1) to F(0). The sequence is that of ATP synthase subunit b from Yersinia enterocolitica serotype O:8 / biotype 1B (strain NCTC 13174 / 8081).